Reading from the N-terminus, the 207-residue chain is ATP-dependent Clp protease proteolytic subunit (207 aa).

Ser111 acts as the Nucleophile in catalysis. His136 is an active-site residue.

It belongs to the peptidase S14 family. As to quaternary structure, fourteen ClpP subunits assemble into 2 heptameric rings which stack back to back to give a disk-like structure with a central cavity, resembling the structure of eukaryotic proteasomes. Component of the ClpAP and ClpXP complexes.

It localises to the cytoplasm. It carries out the reaction Hydrolysis of proteins to small peptides in the presence of ATP and magnesium. alpha-casein is the usual test substrate. In the absence of ATP, only oligopeptides shorter than five residues are hydrolyzed (such as succinyl-Leu-Tyr-|-NHMec, and Leu-Tyr-Leu-|-Tyr-Trp, in which cleavage of the -Tyr-|-Leu- and -Tyr-|-Trp bonds also occurs).. In terms of biological role, cleaves peptides in various proteins in a process that requires ATP hydrolysis. Has a chymotrypsin-like activity. Plays a major role in the degradation of misfolded proteins. In Salmonella enteritidis PT4 (strain P125109), this protein is ATP-dependent Clp protease proteolytic subunit.